A 553-amino-acid chain; its full sequence is ATP synthase F(1) complex subunit alpha, mitochondrial (553 aa).

The N-terminal 43 residues, 1–43, are a transit peptide targeting the mitochondrion; the sequence is MLSVRVAAAVARALPRRAGLVSKNALGSSFVAARNLHASNTRL. Residues Ser53 and Ser65 each carry the phosphoserine modification. Residue Ser76 is modified to Phosphoserine; alternate. Ser76 carries an O-linked (GlcNAc) serine; alternate glycan. A Phosphoserine modification is found at Ser106. Lys123, Lys126, and Lys132 each carry N6-acetyllysine. A Phosphothreonine modification is found at Thr134. An N6-acetyllysine; alternate modification is found at Lys161. At Lys161 the chain carries N6-succinyllysine; alternate. Ser166 bears the Phosphoserine mark. Lys167 is subject to N6-acetyllysine; alternate. The residue at position 167 (Lys167) is an N6-succinyllysine; alternate. Ser184 is subject to Phosphoserine. Arg204 is subject to Omega-N-methylarginine. Gln215, Gly217, Lys218, Thr219, and Ser220 together coordinate ATP. Mg(2+) is bound at residue Thr219. N6-acetyllysine; alternate is present on residues Lys230 and Lys239. Lys230 and Lys239 each carry N6-succinyllysine; alternate. Lys240 carries the N6-acetyllysine modification. N6-acetyllysine; alternate occurs at positions 261 and 305. An N6-succinyllysine; alternate mark is found at Lys261 and Lys305. Asp312 contacts Mg(2+). Lys427 carries the N6-acetyllysine; alternate modification. Lys427 carries the post-translational modification N6-succinyllysine; alternate. N6-acetyllysine is present on Lys434. 2 residues coordinate ATP: Gln473 and Gln475. 4 positions are modified to N6-acetyllysine; alternate: Lys498, Lys506, Lys531, and Lys539. Residues Lys498, Lys506, Lys531, and Lys539 each carry the N6-succinyllysine; alternate modification. At Lys541 the chain carries N6-acetyllysine.

Belongs to the ATPase alpha/beta chains family. As to quaternary structure, homotrimer. Component of the ATP synthase complex composed at least of ATP5F1A/subunit alpha, ATP5F1B/subunit beta, ATP5MC1/subunit c (homooctomer), MT-ATP6/subunit a, MT-ATP8/subunit 8, ATP5ME/subunit e, ATP5MF/subunit f, ATP5MG/subunit g, ATP5MK/subunit k, ATP5MJ/subunit j, ATP5F1C/subunit gamma, ATP5F1D/subunit delta, ATP5F1E/subunit epsilon, ATP5PF/subunit F6, ATP5PB/subunit b, ATP5PD/subunit d, ATP5PO/subunit OSCP. ATP synthase complex consists of a soluble F(1) head domain (subunits alpha(3) and beta(3)) - the catalytic core - and a membrane F(0) domain - the membrane proton channel (subunits c, a, 8, e, f, g, k and j). These two domains are linked by a central stalk (subunits gamma, delta, and epsilon) rotating inside the F1 region and a stationary peripheral stalk (subunits F6, b, d, and OSCP). Interacts with ATPAF2. Interacts with HRG; the interaction occurs on the surface of T-cells and alters the cell morphology when associated with concanavalin (in vitro). Interacts with PLG (angiostatin peptide); the interaction inhibits most of the angiogenic properties of angiostatin. Interacts with BLOC1S1. Interacts with BCL2L1 isoform BCL-X(L); the interaction mediates the association of BCL2L1 isoform BCL-X(L) with the mitochondrial membrane F(1)F(0) ATP synthase and enhances neurons metabolic efficiency. Interacts with CLN5 and PPT1. Interacts with S100A1; this interaction increases F1-ATPase activity. Interacts with ABCB7; this interaction allows the regulation of cellular iron homeostasis and cellular reactive oxygen species (ROS) levels in cardiomyocytes. In terms of processing, acetylated on lysine residues. BLOC1S1 is required for acetylation. Expressed in heart (at protein level).

Its subcellular location is the mitochondrion. It is found in the mitochondrion inner membrane. The protein resides in the cell membrane. Functionally, subunit alpha, of the mitochondrial membrane ATP synthase complex (F(1)F(0) ATP synthase or Complex V) that produces ATP from ADP in the presence of a proton gradient across the membrane which is generated by electron transport complexes of the respiratory chain. ATP synthase complex consist of a soluble F(1) head domain - the catalytic core - and a membrane F(1) domain - the membrane proton channel. These two domains are linked by a central stalk rotating inside the F(1) region and a stationary peripheral stalk. During catalysis, ATP synthesis in the catalytic domain of F(1) is coupled via a rotary mechanism of the central stalk subunits to proton translocation. In vivo, can only synthesize ATP although its ATP hydrolase activity can be activated artificially in vitro. With the catalytic subunit beta (ATP5F1B), forms the catalytic core in the F(1) domain. Subunit alpha does not bear the catalytic high-affinity ATP-binding sites. This Sus scrofa (Pig) protein is ATP synthase F(1) complex subunit alpha, mitochondrial.